The sequence spans 962 residues: Protein lin-36 (962 aa).

Disordered stretches follow at residues 1–53 (MSEE…ETEG) and 74–99 (TSSG…PREE). A compositionally biased stretch (basic and acidic residues) spans 23–40 (DSHVTVHSVEQDSQHSGE). Over residues 74-95 (TSSGEVLDESQVTPTKQASSSQ) the composition is skewed to polar residues. Residues 161–249 (LTHKPCTVCN…IEAFGVPVAI (89 aa)) form a THAP-type zinc finger. Composition is skewed to basic and acidic residues over residues 452 to 472 (KAEE…KHAE) and 534 to 570 (SHEE…DEQF). Disordered regions lie at residues 452–575 (KAEE…KMVQ), 612–676 (IAAT…PEER), 744–788 (QEKG…SASS), and 932–962 (DPKW…DSQQ). Low complexity predominate over residues 626–637 (SSEQTPEPTTSQ). Positions 647-658 (KTKESAVQKVEK) are enriched in basic and acidic residues. Positions 939–951 (QQQQQQQQQQQEQ) are enriched in low complexity. The segment covering 952–962 (FPGQGSSDSQQ) has biased composition (polar residues).

As to expression, expressed in vulval precursor P(3-8).p cells and their descendants, neurons of the head, tail and ventral cord, hypodermal and intestinal cells and germline cells.

It localises to the nucleus. Functionally, required to negatively regulate vulval development. Antagonizes Ras-mediated vulval induction. Acts cell autonomously. The chain is Protein lin-36 (lin-36) from Caenorhabditis elegans.